The chain runs to 43 residues: Protein PsbN (43 aa).

The helical transmembrane segment at 7-27 threads the bilayer; the sequence is VAIFISCLLVSFTGYALYTAF.

Belongs to the PsbN family.

The protein resides in the plastid. It localises to the chloroplast thylakoid membrane. Its function is as follows. May play a role in photosystem I and II biogenesis. This chain is Protein PsbN, found in Zygnema circumcarinatum (Green alga).